Reading from the N-terminus, the 417-residue chain is Acetate kinase (417 aa).

Position 7 (asparagine 7) interacts with Mg(2+). Lysine 14 contributes to the ATP binding site. Residue arginine 104 coordinates substrate. The active-site Proton donor/acceptor is the aspartate 162. ATP is bound by residues 222 to 226 (HLGNG), 297 to 299 (DMR), and 346 to 350 (GIGEN). Glutamate 401 serves as a coordination point for Mg(2+).

This sequence belongs to the acetokinase family. As to quaternary structure, homodimer. Mg(2+) is required as a cofactor. Mn(2+) serves as cofactor.

It is found in the cytoplasm. It catalyses the reaction acetate + ATP = acetyl phosphate + ADP. It participates in metabolic intermediate biosynthesis; acetyl-CoA biosynthesis; acetyl-CoA from acetate: step 1/2. Functionally, catalyzes the formation of acetyl phosphate from acetate and ATP. Can also catalyze the reverse reaction. The polypeptide is Acetate kinase (Chloroherpeton thalassium (strain ATCC 35110 / GB-78)).